We begin with the raw amino-acid sequence, 66 residues long: Surface composition regulator (66 aa).

Belongs to the GlgS family.

In terms of biological role, major determinant of cell surface composition. Negatively regulates motility, adhesion and synthesis of biofilm exopolysaccharides. The polypeptide is Surface composition regulator (Shigella flexneri).